Here is a 394-residue protein sequence, read N- to C-terminus: Actin-related protein 2-B (394 aa).

ATP is bound by residues 160 to 162 (GDG), 214 to 218 (RMMKE), and 305 to 310 (GGSTMY).

This sequence belongs to the actin family. ARP2 subfamily. In terms of assembly, component of the Arp2/3 complex composed of actr2/arp2, actr3/arp3, arpc1b, arpc2, arpc3, arpc4 and arpc5.

The protein localises to the cytoplasm. Its subcellular location is the cytoskeleton. It localises to the cell projection. It is found in the nucleus. Functionally, ATP-binding component of the Arp2/3 complex, a multiprotein complex that mediates actin polymerization upon stimulation by nucleation-promoting factor (NPF). The Arp2/3 complex mediates the formation of branched actin networks in the cytoplasm, providing the force for cell motility. Seems to contact the pointed end of the daughter actin filament. In addition to its role in the cytoplasmic cytoskeleton, the Arp2/3 complex also promotes actin polymerization in the nucleus, thereby regulating gene transcription and repair of damaged DNA. The Arp2/3 complex promotes homologous recombination (HR) repair in response to DNA damage by promoting nuclear actin polymerization, leading to drive motility of double-strand breaks (DSBs). This is Actin-related protein 2-B (actr2b) from Danio rerio (Zebrafish).